The sequence spans 846 residues: Homeodomain-interacting protein kinase 1 (846 aa).

The segment at 47–74 (NPFSIQKAPGTSSDNEQRAPKRRADEEA) is disordered. Over residues 61 to 72 (NEQRAPKRRADE) the composition is skewed to basic and acidic residues. The 337-residue stretch at 147-483 (YEVLEFLGKG…PAEGLESKFV (337 aa)) folds into the Protein kinase domain. Residues 153-161 (LGKGTFGQV) and Lys-176 contribute to the ATP site. Asp-272 acts as the Proton acceptor in catalysis. Residues 741–790 (LAAQPKKNSPAPSVITLSSDEDSNGAGSSNSGSTTRTGAVNPVRNDTLPM) form a disordered region. Polar residues predominate over residues 746 to 757 (KKNSPAPSVITL). Residues 764-773 (NGAGSSNSGS) are compositionally biased toward low complexity.

The protein belongs to the protein kinase superfamily. CMGC Ser/Thr protein kinase family. HIPK subfamily. Broadly expressed during embryogenesis. Expression becomes more restricted during larval development. L3 larvae display robust expression in many head and motor neurons, and lower levels of expression in the intestine and the seam cells of the hypodermis. By late L4 stage, expression is largely restricted to neurons and is maintained in nerve cells of the head and nerve cord during adulthood. Expressed in adult pharyngeal cells, hypodermal cells, gonadal sheath cells and distal tip cells but not in germline cells. Expressed in serotonergic neurons such as ADF and NSM and in GABAergic neurons, including RME, RIS and DVB.

The protein localises to the nucleus. It carries out the reaction L-seryl-[protein] + ATP = O-phospho-L-seryl-[protein] + ADP + H(+). The catalysed reaction is L-threonyl-[protein] + ATP = O-phospho-L-threonyl-[protein] + ADP + H(+). Its function is as follows. Serine/threonine-protein kinase required in the somatic gonadal cells to regulate germline proliferation during larval development and in adulthood. Plays a role in the development/differentiation of gonadal distal tip cells. Required for normal lifespan in a pha-4 and mxl-2-dependent manner. Also contributes to survival following heat or oxidative stress. Prevents sumoylation and inactivation of heat shock transcription factor hsf-1 which enhances hsf-1-dependent transcriptional induction of chaperones in response to heat shock. Also required for hormetic extension of longevity in response to heat stress. Also contributes to longevity by promoting autophagy under nutrient stress conditions through induction of autophagosome formation and autophagy gene expression. Provides protection against proteotoxic polyglutamine aggregate and the associated locomotory toxicity, probably as a result of kinase activity. Contributes to longevity via gamma-aminobutyric acid (GABA)ergic signaling by promoting autophagy through mxl-2, hlh-30 and daf-16 but independent of hsf-1 and phas-4, to induce autophagosome formation and the expression of autophagy genes. Promotes thermotolerance via serotonergic signaling by serotonergic neurons. Preserves neuronal function in aging animals by mitigating against age-associated decline in axonal and synaptic transmissions. Acts as an activator of nhr-49-dependent hypoxia response, including the up-regulation of fmo-2 and acs-2, the induction of autophagosome formation and expression of autophagy genes. This chain is Homeodomain-interacting protein kinase 1, found in Caenorhabditis elegans.